The following is a 174-amino-acid chain: Large ribosomal subunit protein uL10 (174 aa).

It belongs to the universal ribosomal protein uL10 family. As to quaternary structure, part of the ribosomal stalk of the 50S ribosomal subunit. The N-terminus interacts with L11 and the large rRNA to form the base of the stalk. The C-terminus forms an elongated spine to which L12 dimers bind in a sequential fashion forming a multimeric L10(L12)X complex.

In terms of biological role, forms part of the ribosomal stalk, playing a central role in the interaction of the ribosome with GTP-bound translation factors. The protein is Large ribosomal subunit protein uL10 of Syntrophus aciditrophicus (strain SB).